A 185-amino-acid polypeptide reads, in one-letter code: uncharacterized protein (185 aa).

This is an uncharacterized protein from Trypanosoma brucei brucei.